A 49-amino-acid chain; its full sequence is Small, acid-soluble spore protein O (49 aa).

The interval 1–49 is disordered; the sequence is MGKRKANHIVPGMNAASAQGQGTGYNEEFANEPLTAAQRQNNKKRKKNQ.

It belongs to the SspO family.

It is found in the spore core. The chain is Small, acid-soluble spore protein O from Bacillus cytotoxicus (strain DSM 22905 / CIP 110041 / 391-98 / NVH 391-98).